Here is a 189-residue protein sequence, read N- to C-terminus: Elongation factor P (189 aa).

Belongs to the elongation factor P family.

Its subcellular location is the cytoplasm. The protein operates within protein biosynthesis; polypeptide chain elongation. Functionally, involved in peptide bond synthesis. Stimulates efficient translation and peptide-bond synthesis on native or reconstituted 70S ribosomes in vitro. Probably functions indirectly by altering the affinity of the ribosome for aminoacyl-tRNA, thus increasing their reactivity as acceptors for peptidyl transferase. This chain is Elongation factor P, found in Rhizobium etli (strain CIAT 652).